The sequence spans 317 residues: Protoheme IX farnesyltransferase (317 aa).

8 helical membrane-spanning segments follow: residues 25 to 45, 54 to 74, 126 to 146, 154 to 174, 181 to 201, 227 to 244, 249 to 271, and 281 to 301; these read FFALLKPRVMALVIFTALVGM, PVIAAVSLLMIAVGAGASGCL, LAAGLLAFTIAFYAVIYSMWL, IVIGGAAGALPPMIGQAVVTG, LVLFLIIFVWTPPHFWALALV, IVAYTLLLAPLGLAPVAL, LIYGLVALLGGLAMLALSLQVYH, and AAMGLFGFSILYLFLLFSALL.

It belongs to the UbiA prenyltransferase family. Protoheme IX farnesyltransferase subfamily.

Its subcellular location is the cell inner membrane. It catalyses the reaction heme b + (2E,6E)-farnesyl diphosphate + H2O = Fe(II)-heme o + diphosphate. It functions in the pathway porphyrin-containing compound metabolism; heme O biosynthesis; heme O from protoheme: step 1/1. Converts heme B (protoheme IX) to heme O by substitution of the vinyl group on carbon 2 of heme B porphyrin ring with a hydroxyethyl farnesyl side group. This is Protoheme IX farnesyltransferase from Methylobacterium sp. (strain 4-46).